Consider the following 132-residue polypeptide: Small ribosomal subunit protein uS8 (132 aa).

The protein belongs to the universal ribosomal protein uS8 family. As to quaternary structure, part of the 30S ribosomal subunit. Contacts proteins S5 and S12.

In terms of biological role, one of the primary rRNA binding proteins, it binds directly to 16S rRNA central domain where it helps coordinate assembly of the platform of the 30S subunit. This chain is Small ribosomal subunit protein uS8, found in Francisella philomiragia subsp. philomiragia (strain ATCC 25017 / CCUG 19701 / FSC 153 / O#319-036).